The following is a 332-amino-acid chain: tRNA dimethylallyltransferase (332 aa).

ATP is bound at residue 17–24 (GPTCSGKS). Position 19–24 (19–24 (TCSGKS)) interacts with substrate. 2 interaction with substrate tRNA regions span residues 42–45 (DSMQ) and 166–170 (QRISR).

This sequence belongs to the IPP transferase family. As to quaternary structure, monomer. It depends on Mg(2+) as a cofactor.

It carries out the reaction adenosine(37) in tRNA + dimethylallyl diphosphate = N(6)-dimethylallyladenosine(37) in tRNA + diphosphate. Catalyzes the transfer of a dimethylallyl group onto the adenine at position 37 in tRNAs that read codons beginning with uridine, leading to the formation of N6-(dimethylallyl)adenosine (i(6)A). The polypeptide is tRNA dimethylallyltransferase (Gluconobacter oxydans (strain 621H) (Gluconobacter suboxydans)).